A 258-amino-acid polypeptide reads, in one-letter code: Flap endonuclease Xni (258 aa).

Position 109 (aspartate 109) interacts with Mg(2+). The 90-residue stretch at 165-254 (VKPEQLPDYW…GFNLQDIRYL (90 aa)) folds into the 5'-3' exonuclease domain. K(+) contacts are provided by leucine 176, alanine 177, proline 185, isoleucine 187, and isoleucine 190. An interaction with DNA region spans residues 189-194 (GIGPKA).

It belongs to the Xni family. Mg(2+) is required as a cofactor. Requires K(+) as cofactor.

In terms of biological role, has flap endonuclease activity. During DNA replication, flap endonucleases cleave the 5'-overhanging flap structure that is generated by displacement synthesis when DNA polymerase encounters the 5'-end of a downstream Okazaki fragment. This is Flap endonuclease Xni from Photobacterium profundum (strain SS9).